The chain runs to 437 residues: UPF0597 protein Shal_0864 (437 aa).

It belongs to the UPF0597 family.

The chain is UPF0597 protein Shal_0864 from Shewanella halifaxensis (strain HAW-EB4).